A 231-amino-acid chain; its full sequence is Eukaryotic translation initiation factor 4E allele Eva1 (231 aa).

The segment covering 1-20 (MAAAEMERTTSFDAAEKLKA) has biased composition (basic and acidic residues). Positions 1–34 (MAAAEMERTTSFDAAEKLKAADAGGGEVDDELEE) are disordered. 2 EIF4G-binding regions span residues 56–59 (HPLE) and 66–102 (FDNPTARSRQIDWGSSLRNVYTFSTVEDFWGAYNNIH). MRNA-binding positions include 74–79 (RQIDWG), lysine 106, and 124–125 (WE). Cysteine 129 and cysteine 167 form a disulfide bridge. The tract at residues 150 to 159 (YTLLAMIGHQ) is EIF4G-binding. MRNA-binding positions include 174–179 (RVKGEK) and 219–223 (KRLDR).

It belongs to the eukaryotic initiation factor 4E family. As to quaternary structure, EIF4F is a multi-subunit complex, the composition of which varies with external and internal environmental conditions. It is composed of at least EIF4A, EIF4E and EIF4G. EIF4E is also known to interact with other partners. In higher plants two isoforms of EIF4F have been identified, named isoform EIF4F and isoform EIF(iso)4F. Isoform EIF4F has subunits p220 and p26, whereas isoform EIF(iso)4F has subunits p82 and p28. In terms of assembly, (Microbial infection) Interacts with potyvirus viral genome-linked protein (VPg); this interaction is possible in susceptible hosts but impaired in resistant plants. In terms of processing, according to the redox status, the Cys-129-Cys-167 disulfide bridge may have a role in regulating protein function by affecting its ability to bind capped mRNA.

It is found in the nucleus. The protein resides in the cytoplasm. Functionally, component of the protein complex eIF4F, which is involved in the recognition of the mRNA cap, ATP-dependent unwinding of 5'-terminal secondary structure and recruitment of mRNA to the ribosome. Recognizes and binds the 7-methylguanosine-containing mRNA cap during an early step in the initiation of protein synthesis and facilitates ribosome binding by inducing the unwinding of the mRNAs secondary structures. Key component of recessive resistance to potyviruses. (Microbial infection) Susceptibility host factor required for viral infection (e.g. Potato virus Y (PVY)) by recruiting viral RNAs to the host ribosomal complex via an interaction with viral genome-linked protein (VPg). Displayed sequence is the allele Eva1 that confers resistance to potato virus Y (PVY) by failing to interact with the viral VPg protein. This Solanum etuberosum (Wild potato) protein is Eukaryotic translation initiation factor 4E allele Eva1.